Here is a 203-residue protein sequence, read N- to C-terminus: Urease accessory protein UreG (203 aa).

Residue 10–17 participates in GTP binding; it reads GPVGAGKT.

This sequence belongs to the SIMIBI class G3E GTPase family. UreG subfamily. Homodimer. UreD, UreF and UreG form a complex that acts as a GTP-hydrolysis-dependent molecular chaperone, activating the urease apoprotein by helping to assemble the nickel containing metallocenter of UreC. The UreE protein probably delivers the nickel.

It localises to the cytoplasm. Facilitates the functional incorporation of the urease nickel metallocenter. This process requires GTP hydrolysis, probably effectuated by UreG. In Kocuria rhizophila (strain ATCC 9341 / DSM 348 / NBRC 103217 / DC2201), this protein is Urease accessory protein UreG.